A 156-amino-acid polypeptide reads, in one-letter code: Small ribosomal subunit protein uS7 (156 aa).

It belongs to the universal ribosomal protein uS7 family. As to quaternary structure, part of the 30S ribosomal subunit. Contacts proteins S9 and S11.

In terms of biological role, one of the primary rRNA binding proteins, it binds directly to 16S rRNA where it nucleates assembly of the head domain of the 30S subunit. Is located at the subunit interface close to the decoding center, probably blocks exit of the E-site tRNA. This chain is Small ribosomal subunit protein uS7, found in Clostridium botulinum (strain Okra / Type B1).